We begin with the raw amino-acid sequence, 205 residues long: Nitrophorin-4 (205 aa).

The signal sequence occupies residues 1–21 (MKSYTSLLAVAILCLFGGVNG). 2 disulfides stabilise this stretch: C23–C143 and C62–C192. H80 lines the heme pocket.

This sequence belongs to the calycin superfamily. Nitrophorin family. Requires heme b as cofactor. Salivary gland (at protein level).

The protein localises to the secreted. It carries out the reaction 3 nitrite + 2 H(+) = 2 nitric oxide + nitrate + H2O. Functionally, heme-based protein that delivers nitric oxide gas (NO) to the victim while feeding, resulting in vasodilation and inhibition of platelet aggregation. Reversibly binds nitric oxide (NO). Also binds tightly to histamine, which is released by the host to induce wound healing. NO release is pH dependent and linked to loop dynamics. The polypeptide is Nitrophorin-4 (Rhodnius prolixus (Triatomid bug)).